Reading from the N-terminus, the 56-residue chain is Mitoregulin (56 aa).

Over 2 to 9 the chain is Mitochondrial matrix; the sequence is ADVSERTL. A helical transmembrane segment spans residues 10-27; it reads QLSVLVAFASGVLLGWQA. Residues 28–56 are Mitochondrial intermembrane-facing; that stretch reads NRLRRRYLDWRKRRLQDKLAATQKKLDLA.

As to quaternary structure, interacts with mitochondrial trifunctional enzyme, a heterotetrameric complex composed of 2 HADHA subunits and 2 HADHB subunits. Interacts with cytochrome b5 reductase CYB5R3; the interaction is required to maintain cellular lipid composition and leads to stimulation of mitochondrial respiratory complex I activity. Interacts with ATP synthase subunit ATP5F1B/ATP5B.

It is found in the mitochondrion inner membrane. Positively regulates mitochondrial complex assembly and/or stability. Increases mitochondrial membrane potential while decreasing mitochondrial reactive oxygen species. Increases mitochondrial respiration rate. Increased mitochondrial respiratory activity promotes myogenic differentiation which facilitates muscle growth and regeneration. Increases mitochondrial calcium retention capacity. Plays a role in maintenance of cellular lipid composition through its interaction with cytochrome b5 reductase CYB5R3 which is required for mitochondrial respiratory complex I activity. Interacts with the mitochondrial trifunctional enzyme complex (MTE) and enhances fatty acid beta-oxidation. Not required for MTE formation or stability. Modulates triglyceride clearance in adipocytes through its role in regulating fatty acid beta-oxidation and lipolysis. The sequence is that of Mitoregulin from Homo sapiens (Human).